A 120-amino-acid chain; its full sequence is NAD(P)H-quinone oxidoreductase subunit 3, chloroplastic (120 aa).

Transmembrane regions (helical) follow at residues Ile-9 to Gly-29, Met-64 to Met-84, and Val-88 to Leu-108.

The protein belongs to the complex I subunit 3 family. As to quaternary structure, NDH is composed of at least 16 different subunits, 5 of which are encoded in the nucleus.

The protein localises to the plastid. The protein resides in the chloroplast thylakoid membrane. It carries out the reaction a plastoquinone + NADH + (n+1) H(+)(in) = a plastoquinol + NAD(+) + n H(+)(out). The enzyme catalyses a plastoquinone + NADPH + (n+1) H(+)(in) = a plastoquinol + NADP(+) + n H(+)(out). Its function is as follows. NDH shuttles electrons from NAD(P)H:plastoquinone, via FMN and iron-sulfur (Fe-S) centers, to quinones in the photosynthetic chain and possibly in a chloroplast respiratory chain. The immediate electron acceptor for the enzyme in this species is believed to be plastoquinone. Couples the redox reaction to proton translocation, and thus conserves the redox energy in a proton gradient. The polypeptide is NAD(P)H-quinone oxidoreductase subunit 3, chloroplastic (Arabis hirsuta (Hairy rock-cress)).